The sequence spans 163 residues: Large ribosomal subunit protein uL10 (163 aa).

This sequence belongs to the universal ribosomal protein uL10 family. In terms of assembly, part of the ribosomal stalk of the 50S ribosomal subunit. The N-terminus interacts with L11 and the large rRNA to form the base of the stalk. The C-terminus forms an elongated spine to which L12 dimers bind in a sequential fashion forming a multimeric L10(L12)X complex.

In terms of biological role, forms part of the ribosomal stalk, playing a central role in the interaction of the ribosome with GTP-bound translation factors. This chain is Large ribosomal subunit protein uL10, found in Haemophilus ducreyi (strain 35000HP / ATCC 700724).